Here is a 263-residue protein sequence, read N- to C-terminus: HTH-type transcriptional regulator KdgR (263 aa).

Residues 13 to 74 form the HTH iclR-type domain; it reads VSSVLKVFGI…GESEKYSLTL (62 aa). The H-T-H motif DNA-binding region spans 34-53; the sequence is ITELSQRVMMSKSTVYRFLQ. The region spanning 89-258 is the IclR-ED domain; sequence LIRSADIQMR…ARKISAQMGY (170 aa).

The protein resides in the cytoplasm. Transcriptional repressor that negatively regulates the expression of kdgT, kdgK and kdgA, which encode proteins involved in transport and catabolism of 2-keto-3-deoxygluconate (KDG). Also represses expression of eda, which encodes the Entner-Doudoroff aldolase, by binding to its P2 promoter region. This chain is HTH-type transcriptional regulator KdgR, found in Escherichia coli (strain K12).